A 538-amino-acid polypeptide reads, in one-letter code: Putative outer membrane porin BglH (538 aa).

Positions 1 to 25 (MFRRNIITSAILLMAPLAFSAQSLA) are cleaved as a signal peptide.

The protein belongs to the porin LamB (TC 1.B.3) family.

It localises to the cell outer membrane. In terms of biological role, may be a sugar porin with a broad carbohydrate specificity. This is Putative outer membrane porin BglH (bglH) from Escherichia coli O6:H1 (strain CFT073 / ATCC 700928 / UPEC).